Here is a 475-residue protein sequence, read N- to C-terminus: Adenosylhomocysteinase (475 aa).

The substrate site is built by Thr63, Asp138, and Glu199. 200-202 (TTT) is a binding site for NAD(+). Residues Lys229 and Asp233 each coordinate substrate. Residues Asn234, 263-268 (GYGDVG), Glu286, Asn321, 342-344 (IGH), and Asn389 contribute to the NAD(+) site.

This sequence belongs to the adenosylhomocysteinase family. It depends on NAD(+) as a cofactor.

It is found in the cytoplasm. It catalyses the reaction S-adenosyl-L-homocysteine + H2O = L-homocysteine + adenosine. The protein operates within amino-acid biosynthesis; L-homocysteine biosynthesis; L-homocysteine from S-adenosyl-L-homocysteine: step 1/1. May play a key role in the regulation of the intracellular concentration of adenosylhomocysteine. The chain is Adenosylhomocysteinase from Solibacter usitatus (strain Ellin6076).